We begin with the raw amino-acid sequence, 545 residues long: CTP synthase (545 aa).

The amidoligase domain stretch occupies residues 1–266; it reads MTTNYIFVTG…DDYICKRFGL (266 aa). A CTP-binding site is contributed by Ser-14. Ser-14 lines the UTP pocket. Residues 15-20 and Asp-72 each bind ATP; that span reads SLGKGI. 2 residues coordinate Mg(2+): Asp-72 and Glu-140. CTP is bound by residues 147–149, 187–192, and Lys-223; these read DIE and KTKPTQ. UTP-binding positions include 187-192 and Lys-223; that span reads KTKPTQ. An ATP-binding site is contributed by 239–241; the sequence is KDV. The Glutamine amidotransferase type-1 domain maps to 291–542; that stretch reads TIGMVGKYIA…VKAAGEYQKR (252 aa). Gly-352 provides a ligand contact to L-glutamine. Catalysis depends on Cys-379, which acts as the Nucleophile; for glutamine hydrolysis. Residues 380–383, Glu-403, and Arg-470 contribute to the L-glutamine site; that span reads LGMQ. Catalysis depends on residues His-515 and Glu-517.

Belongs to the CTP synthase family. As to quaternary structure, homotetramer.

The enzyme catalyses UTP + L-glutamine + ATP + H2O = CTP + L-glutamate + ADP + phosphate + 2 H(+). It carries out the reaction L-glutamine + H2O = L-glutamate + NH4(+). The catalysed reaction is UTP + NH4(+) + ATP = CTP + ADP + phosphate + 2 H(+). Its pathway is pyrimidine metabolism; CTP biosynthesis via de novo pathway; CTP from UDP: step 2/2. Allosterically activated by GTP, when glutamine is the substrate; GTP has no effect on the reaction when ammonia is the substrate. The allosteric effector GTP functions by stabilizing the protein conformation that binds the tetrahedral intermediate(s) formed during glutamine hydrolysis. Inhibited by the product CTP, via allosteric rather than competitive inhibition. Catalyzes the ATP-dependent amination of UTP to CTP with either L-glutamine or ammonia as the source of nitrogen. Regulates intracellular CTP levels through interactions with the four ribonucleotide triphosphates. The chain is CTP synthase from Sodalis glossinidius (strain morsitans).